A 105-amino-acid chain; its full sequence is uncharacterized protein (105 aa).

The segment at 58-105 (YRKKKPNHSRDNPRINSNLSTNYAQAKSVERSRSNSLNSGPNPLENAT) is disordered. Composition is skewed to polar residues over residues 71–82 (RINSNLSTNYAQ) and 91–105 (SNSLNSGPNPLENAT).

Its subcellular location is the mitochondrion. This is an uncharacterized protein from Arabidopsis thaliana (Mouse-ear cress).